Here is a 690-residue protein sequence, read N- to C-terminus: Glycine--tRNA ligase beta subunit (690 aa).

This sequence belongs to the class-II aminoacyl-tRNA synthetase family. Tetramer of two alpha and two beta subunits.

Its subcellular location is the cytoplasm. It carries out the reaction tRNA(Gly) + glycine + ATP = glycyl-tRNA(Gly) + AMP + diphosphate. This chain is Glycine--tRNA ligase beta subunit, found in Syntrophus aciditrophicus (strain SB).